Reading from the N-terminus, the 392-residue chain is Succinate--CoA ligase [ADP-forming] subunit beta (392 aa).

The region spanning 9–247 is the ATP-grasp domain; sequence KAILRKYGVA…VTEEDPLEVE (239 aa). Residues lysine 49, 56–58, glutamate 102, leucine 105, and glutamate 110 each bind ATP; that span reads GRG. Residues asparagine 202 and aspartate 216 each contribute to the Mg(2+) site. Residues asparagine 267 and 324-326 each bind substrate; that span reads GIL.

Belongs to the succinate/malate CoA ligase beta subunit family. As to quaternary structure, heterotetramer of two alpha and two beta subunits. Requires Mg(2+) as cofactor.

It carries out the reaction succinate + ATP + CoA = succinyl-CoA + ADP + phosphate. The enzyme catalyses GTP + succinate + CoA = succinyl-CoA + GDP + phosphate. It participates in carbohydrate metabolism; tricarboxylic acid cycle; succinate from succinyl-CoA (ligase route): step 1/1. Its function is as follows. Succinyl-CoA synthetase functions in the citric acid cycle (TCA), coupling the hydrolysis of succinyl-CoA to the synthesis of either ATP or GTP and thus represents the only step of substrate-level phosphorylation in the TCA. The beta subunit provides nucleotide specificity of the enzyme and binds the substrate succinate, while the binding sites for coenzyme A and phosphate are found in the alpha subunit. The polypeptide is Succinate--CoA ligase [ADP-forming] subunit beta (Koribacter versatilis (strain Ellin345)).